We begin with the raw amino-acid sequence, 140 residues long: Pro-vaccinia growth factor (140 aa).

An N-terminal signal peptide occupies residues 1–18 (MLINYLMLLFAAMIIRSF). The Extracellular segment spans residues 19–100 (ADSGNAIETT…SEKPNTTTSY (82 aa)). An N-linked (GlcNAc...) asparagine; by host glycan is attached at asparagine 34. The EGF-like domain maps to 41-81 (AIRLCGPEGDGYCLHGDCIHARDIDGMYCRCSHGYTGIRCQ). Cystine bridges form between cysteine 45–cysteine 58, cysteine 53–cysteine 69, and cysteine 71–cysteine 80. Asparagine 95 carries an N-linked (GlcNAc...) asparagine; by host glycan. A helical transmembrane segment spans residues 101 to 121 (IPSPGIMLVLVGIIIITCCLL). Over 122–140 (SVYRFTRRTKLPLQDMVVP) the chain is Cytoplasmic.

It belongs to the orthopoxvirus OPG019 family. Vaccinia growth factor interacts with host EGFR and promotes EGFR dimerization.

The protein localises to the host membrane. Its subcellular location is the secreted. In terms of biological role, stimulates cellular proliferation (hyperplasia)and mobility around infected cells to promote rapid and efficient spread of infection. This effect is beneficial for virus replication in vivo, because poxviruses replicate possibly better in proliferating cells than in quiescent cells. Acts by binding host EGFR, inducing its dimerization, autophosphorylation and leading to activation of several cellular pathways regulating cell proliferation or cell survival. The activation by host EGFR of mitogen activated protein kinases (MAPK) and extracellular-signal regulated kinases (ERK) are essential for the positive effect of vaccinia growth factor on poxvirus virulence in vivo. This chain is Pro-vaccinia growth factor (OPG019), found in Homo sapiens (Human).